Reading from the N-terminus, the 360-residue chain is tRNA N6-adenosine threonylcarbamoyltransferase (360 aa).

Fe cation-binding residues include H111 and H115. Residues 134–138 (LVSGG), D167, G180, D184, and N279 each bind substrate. Fe cation is bound at residue D307.

The protein belongs to the KAE1 / TsaD family. Fe(2+) is required as a cofactor.

The protein localises to the cytoplasm. The catalysed reaction is L-threonylcarbamoyladenylate + adenosine(37) in tRNA = N(6)-L-threonylcarbamoyladenosine(37) in tRNA + AMP + H(+). Functionally, required for the formation of a threonylcarbamoyl group on adenosine at position 37 (t(6)A37) in tRNAs that read codons beginning with adenine. Is involved in the transfer of the threonylcarbamoyl moiety of threonylcarbamoyl-AMP (TC-AMP) to the N6 group of A37, together with TsaE and TsaB. TsaD likely plays a direct catalytic role in this reaction. The protein is tRNA N6-adenosine threonylcarbamoyltransferase of Acaryochloris marina (strain MBIC 11017).